A 198-amino-acid polypeptide reads, in one-letter code: Nucleoside triphosphate pyrophosphatase (198 aa).

The active-site Proton acceptor is Asp70.

It belongs to the Maf family. Requires a divalent metal cation as cofactor.

It localises to the cytoplasm. It catalyses the reaction a ribonucleoside 5'-triphosphate + H2O = a ribonucleoside 5'-phosphate + diphosphate + H(+). The enzyme catalyses a 2'-deoxyribonucleoside 5'-triphosphate + H2O = a 2'-deoxyribonucleoside 5'-phosphate + diphosphate + H(+). In terms of biological role, nucleoside triphosphate pyrophosphatase. May have a dual role in cell division arrest and in preventing the incorporation of modified nucleotides into cellular nucleic acids. The polypeptide is Nucleoside triphosphate pyrophosphatase (Thermosynechococcus vestitus (strain NIES-2133 / IAM M-273 / BP-1)).